We begin with the raw amino-acid sequence, 447 residues long: Argininosuccinate synthase (447 aa).

Residues 20-28 and Ala46 contribute to the ATP site; that span reads AFSGGLDTS. L-citrulline is bound at residue Tyr102. Positions 132 and 134 each coordinate ATP. L-aspartate contacts are provided by Thr134, Asn138, and Asp139. Asn138 is an L-citrulline binding site. Asp139 serves as a coordination point for ATP. L-citrulline is bound by residues Arg142 and Ser195. Asp197 is a binding site for ATP. L-citrulline-binding residues include Thr204, Glu206, and Glu283.

It belongs to the argininosuccinate synthase family. Type 2 subfamily. Homotetramer.

The protein resides in the cytoplasm. The enzyme catalyses L-citrulline + L-aspartate + ATP = 2-(N(omega)-L-arginino)succinate + AMP + diphosphate + H(+). Its pathway is amino-acid biosynthesis; L-arginine biosynthesis; L-arginine from L-ornithine and carbamoyl phosphate: step 2/3. The sequence is that of Argininosuccinate synthase from Neisseria meningitidis serogroup C (strain 053442).